A 63-amino-acid chain; its full sequence is Large ribosomal subunit protein uL29 (63 aa).

It belongs to the universal ribosomal protein uL29 family.

The protein is Large ribosomal subunit protein uL29 of Glaesserella parasuis serovar 5 (strain SH0165) (Haemophilus parasuis).